Here is a 278-residue protein sequence, read N- to C-terminus: Heat stress transcription factor C-2b (278 aa).

Positions 105 to 114 (AAGGGGGGGG) are enriched in gly residues. A disordered region spans residues 105–132 (AAGGGGGGGGGKRRDASADGGGGGGDED). The tract at residues 143 to 179 (LKQEQRTIDDRVAAMWRRVQETERRPKQMLAFLLKVV) is hydrophobic repeat HR-A/B. The short motif at 219-222 (KRAR) is the Nuclear localization signal element.

This sequence belongs to the HSF family. Class C subfamily. As to quaternary structure, homotrimer. Exhibits temperature-dependent phosphorylation.

The protein resides in the nucleus. In terms of biological role, transcriptional regulator that specifically binds DNA of heat shock promoter elements (HSE). This Oryza sativa subsp. japonica (Rice) protein is Heat stress transcription factor C-2b (HSFC2B).